A 450-amino-acid polypeptide reads, in one-letter code: Methylenetetrahydrofolate--tRNA-(uracil-5-)-methyltransferase TrmFO (450 aa).

G10 to G15 is an FAD binding site.

It belongs to the MnmG family. TrmFO subfamily. It depends on FAD as a cofactor.

The protein resides in the cytoplasm. The catalysed reaction is uridine(54) in tRNA + (6R)-5,10-methylene-5,6,7,8-tetrahydrofolate + NADH + H(+) = 5-methyluridine(54) in tRNA + (6S)-5,6,7,8-tetrahydrofolate + NAD(+). It catalyses the reaction uridine(54) in tRNA + (6R)-5,10-methylene-5,6,7,8-tetrahydrofolate + NADPH + H(+) = 5-methyluridine(54) in tRNA + (6S)-5,6,7,8-tetrahydrofolate + NADP(+). In terms of biological role, catalyzes the folate-dependent formation of 5-methyl-uridine at position 54 (M-5-U54) in all tRNAs. The sequence is that of Methylenetetrahydrofolate--tRNA-(uracil-5-)-methyltransferase TrmFO from Anaeromyxobacter dehalogenans (strain 2CP-C).